The chain runs to 382 residues: MKITKITTYRLPPRWMFLKIETDEGVVGWGEPVIEGRARTVEAAVHELGDYLIGQDPSRINDLWQVMYRAGFYRGGPILMSAIAGIDQALWDIKGKVLNAPVWQLMGGLVRDKIKAYSWVGGDRPADVIGGIKTLREIGFDTFKLNGCEELGLIDNSRAVDAAVNTVAQIREAFGNQIEFGLDFHGRVSAPMAKVLIKELEPYRPLFIEEPVLAEQAEYYPKLAAQTHIPLAAGERMFSRFDFKRVLEAGGISILQPDLSHAGGITECYKIAGMAEAYDVTLAPHCPLGPIALAACLHIDFVSYNAVLQEQSMGIHYNKGAELLDFVKNKEDFSMVGGFFKPLTKPGLGVEIDEAKVIEFSKNAPDWRNPLWRHEDNSVAEW.

A Mg(2+)-binding site is contributed by Asp183. The active-site Proton donor is His185. Mg(2+) contacts are provided by Glu209 and Glu235. His285 serves as the catalytic Proton acceptor.

It belongs to the mandelate racemase/muconate lactonizing enzyme family. GalD subfamily. The cofactor is Mg(2+).

It catalyses the reaction D-galactonate = 2-dehydro-3-deoxy-D-galactonate + H2O. It functions in the pathway carbohydrate acid metabolism; D-galactonate degradation; D-glyceraldehyde 3-phosphate and pyruvate from D-galactonate: step 1/3. Catalyzes the dehydration of D-galactonate to 2-keto-3-deoxy-D-galactonate. The chain is D-galactonate dehydratase from Escherichia coli O9:H4 (strain HS).